The sequence spans 1030 residues: MMS19 nucleotide excision repair protein homolog (1030 aa).

Alanine 2 is modified (N-acetylalanine). Position 496 is an N6-acetyllysine (lysine 496). 4 HEAT repeats span residues 866–904 (QRFF…RLPK), 908–946 (LPEL…EAPQ), 949–987 (SLHV…LPTP), and 990–1028 (LPYK…LGSP). The residue at position 1027 (serine 1027) is a Phosphoserine.

Belongs to the MET18/MMS19 family. Component of the CIA complex. In the CIA complex, interacts directly with CIAO2B and CIAO3. Component of the MMXD complex, composed of CIAO1, ERCC2, CIAO2B, MMS19 and SLC25A5. Interacts with CIAO2B; the interaction is direct. Interacts with ERCC2/XPD; the interaction is direct. Interacts with ERCC3/XPB and NCOA3/RAC3. Interacts with RTEL1; the interaction mediates the association of RTEL1 with the CIA complex. Interacts with BRIP1. Interacts with KIF4A; the interaction facilitates the transfer of Fe-S clusters to KIF4A to ensure proper localization of KIF4A to the mitotic machinery components. Interacts with CCDC117; the interaction is indirect. Post-translationally, ubiquitinated; undergoes 'Lys-48'-linked polyubiquitination by MAGEF1-NSMCE1 ubiquitin ligase complex leading to proteasomal degradation. Ubiquitously expressed with higher expression in testis.

The protein localises to the nucleus. Its subcellular location is the cytoplasm. It is found in the cytoskeleton. The protein resides in the spindle. It localises to the microtubule organizing center. The protein localises to the centrosome. Functionally, key component of the cytosolic iron-sulfur protein assembly (CIA) complex, a multiprotein complex that mediates the incorporation of iron-sulfur cluster into apoproteins specifically involved in DNA metabolism and genomic integrity. In the CIA complex, MMS19 acts as an adapter between early-acting CIA components and a subset of cellular target iron-sulfur proteins such as ERCC2/XPD, FANCJ and RTEL1, thereby playing a key role in nucleotide excision repair (NER), homologous recombination-mediated double-strand break DNA repair, DNA replication and RNA polymerase II (POL II) transcription. As part of the mitotic spindle-associated MMXD complex, plays a role in chromosome segregation, probably by facilitating iron-sulfur (Fe-S) cluster assembly into ERCC2/XPD. Together with CIAO2, facilitates the transfer of Fe-S clusters to the motor protein KIF4A, which ensures proper localization of KIF4A to mitotic machinery components to promote the progression of mitosis. Indirectly acts as a transcriptional coactivator of estrogen receptor (ER), via its role in iron-sulfur insertion into some component of the TFIIH-machinery. The sequence is that of MMS19 nucleotide excision repair protein homolog from Homo sapiens (Human).